Reading from the N-terminus, the 158-residue chain is SsrA-binding protein (158 aa).

Residues 133–147 (KRQALRERQDNREAQ) show a composition bias toward basic and acidic residues. The tract at residues 133 to 158 (KRQALRERQDNREAQRAMASRKHLGE) is disordered.

It belongs to the SmpB family.

The protein resides in the cytoplasm. Its function is as follows. Required for rescue of stalled ribosomes mediated by trans-translation. Binds to transfer-messenger RNA (tmRNA), required for stable association of tmRNA with ribosomes. tmRNA and SmpB together mimic tRNA shape, replacing the anticodon stem-loop with SmpB. tmRNA is encoded by the ssrA gene; the 2 termini fold to resemble tRNA(Ala) and it encodes a 'tag peptide', a short internal open reading frame. During trans-translation Ala-aminoacylated tmRNA acts like a tRNA, entering the A-site of stalled ribosomes, displacing the stalled mRNA. The ribosome then switches to translate the ORF on the tmRNA; the nascent peptide is terminated with the 'tag peptide' encoded by the tmRNA and targeted for degradation. The ribosome is freed to recommence translation, which seems to be the essential function of trans-translation. This Leifsonia xyli subsp. xyli (strain CTCB07) protein is SsrA-binding protein.